A 150-amino-acid chain; its full sequence is uncharacterized protein (150 aa).

A signal peptide spans 1 to 23 (MYSILIACLVLLLCLIIYVGHRA).

It belongs to the asfivirus EP152R family.

It localises to the virion. This is an uncharacterized protein from African swine fever virus (isolate Warthog/Namibia/Wart80/1980) (ASFV).